A 214-amino-acid polypeptide reads, in one-letter code: Pyrrolidone-carboxylate peptidase (214 aa).

Active-site residues include Glu-78, Cys-141, and His-165.

It belongs to the peptidase C15 family. As to quaternary structure, homotetramer.

The protein localises to the cytoplasm. The catalysed reaction is Release of an N-terminal pyroglutamyl group from a polypeptide, the second amino acid generally not being Pro.. In terms of biological role, removes 5-oxoproline from various penultimate amino acid residues except L-proline. The protein is Pyrrolidone-carboxylate peptidase of Streptococcus pneumoniae serotype 2 (strain D39 / NCTC 7466).